The primary structure comprises 256 residues: tRNA (guanine-N(7)-)-methyltransferase (256 aa).

The tract at residues 17–45 (TCETVPGLPQKKHYRQRAHSNPHSDHDIE) is disordered. Over residues 26-36 (QKKHYRQRAHS) the composition is skewed to basic residues. Residues Gly-74, 97–98 (EI), 132–133 (NA), and Leu-152 contribute to the S-adenosyl-L-methionine site. The active site involves Asp-155. 230–232 (TEE) is an S-adenosyl-L-methionine binding site.

This sequence belongs to the class I-like SAM-binding methyltransferase superfamily. TrmB family.

Its subcellular location is the nucleus. It catalyses the reaction guanosine(46) in tRNA + S-adenosyl-L-methionine = N(7)-methylguanosine(46) in tRNA + S-adenosyl-L-homocysteine. It functions in the pathway tRNA modification; N(7)-methylguanine-tRNA biosynthesis. Its function is as follows. Catalyzes the formation of N(7)-methylguanine at position 46 (m7G46) in tRNA. This Caenorhabditis elegans protein is tRNA (guanine-N(7)-)-methyltransferase.